The primary structure comprises 195 residues: Small ribosomal subunit protein uS4c (195 aa).

The S4 RNA-binding domain maps to 82–143 (MRLDNILFRL…KQRSKALIQN (62 aa)).

This sequence belongs to the universal ribosomal protein uS4 family. As to quaternary structure, part of the 30S ribosomal subunit. Contacts protein S5. The interaction surface between S4 and S5 is involved in control of translational fidelity.

Its subcellular location is the plastid. It localises to the chloroplast. One of the primary rRNA binding proteins, it binds directly to 16S rRNA where it nucleates assembly of the body of the 30S subunit. Its function is as follows. With S5 and S12 plays an important role in translational accuracy. In Gladiolus murielae (Abyssinian gladiolus), this protein is Small ribosomal subunit protein uS4c (rps4).